A 128-amino-acid chain; its full sequence is MSKPFYVKFEVPPELAEKVYEAVKKARETGGKIKKGTNETTKAVERGIAKLVIIAEDVDPPEIVAHLPLLCDEKKIPYVYVPSKKRLGEAAGIEVAAASAAIIDPGGAKDLVEEIIKQVQELRAKAGA.

This sequence belongs to the eukaryotic ribosomal protein eL8 family. In terms of assembly, part of the 50S ribosomal subunit. Probably part of the RNase P complex.

Its subcellular location is the cytoplasm. Its function is as follows. Multifunctional RNA-binding protein that recognizes the K-turn motif in ribosomal RNA, the RNA component of RNase P, box H/ACA, box C/D and box C'/D' sRNAs. This chain is Large ribosomal subunit protein eL8, found in Staphylothermus marinus (strain ATCC 43588 / DSM 3639 / JCM 9404 / F1).